The chain runs to 301 residues: tRNA dimethylallyltransferase (301 aa).

9–16 (GPTASGKS) contributes to the ATP binding site. Residue 11-16 (TASGKS) coordinates substrate. Positions 34-37 (DSMQ) are interaction with substrate tRNA.

It belongs to the IPP transferase family. In terms of assembly, monomer. The cofactor is Mg(2+).

The enzyme catalyses adenosine(37) in tRNA + dimethylallyl diphosphate = N(6)-dimethylallyladenosine(37) in tRNA + diphosphate. Its function is as follows. Catalyzes the transfer of a dimethylallyl group onto the adenine at position 37 in tRNAs that read codons beginning with uridine, leading to the formation of N6-(dimethylallyl)adenosine (i(6)A). The sequence is that of tRNA dimethylallyltransferase from Corynebacterium glutamicum (strain ATCC 13032 / DSM 20300 / JCM 1318 / BCRC 11384 / CCUG 27702 / LMG 3730 / NBRC 12168 / NCIMB 10025 / NRRL B-2784 / 534).